The sequence spans 888 residues: MVPSPALVGTPSVFPHHQSTSFFQETASFFNLDWERLWHSRSNSNSTSSPRNSPSQLSPPMAATAALRRSSDYGSADTECGEPCETGAPVSLNEVDLLAKMEQLNKSNEEDSRSVASKKTGSSESRKGAREHSPEEDEYFQEDLWSVWGELILNWEIEVKKRPNYIKDLVKRGIPQHFRMIAWQNLSNASVSSVHDLYSDYMRQSSVYEKVIQRDIPRTYPELDFFKDGERGQSLLFNVIKAYSVHDKEVGYCQGSAFIVGLLLLQMPEEEAFAVLVSLMENYRLRELYKPTMTDLGLCMFQLECLVQDQMPDLYTHFNNMGFDTSMYASSWFLTLFTTTMPLDIANRIMDCFLVEGMDFIFCISIAILQQARIELLRLDMEGMLKYFQREVRERYEFDADLLFTVANQVQLNAKRMKRLEKDYLTKRTKEQEEAVELRRLRTENRLLRQRIDYLEAESSALADRLVKGQVNLAQEAENYINIAHELNKLRDMNSDVHRKLEGAYETIRELSSARRDNIMDTGTQVDDTSMIEHIHSLQQELIEAHTRQADSENTLRDAKLRVSELEMANKRLLENEPSEDVAGLQEELISVKMREAESSLALKEMRQRLAELEQHWAKYVHVRAFDPSSASIEKESTSEAHSTQQQPSPPLTSARARLAKITASLIGGSTEETDNCISVRELEDQLMGVRIKEADTLAELKEMRQKVMELETQNHVCTNQLKRQDEEMKRVREDSEVLVKKRKELEDQLKDEKEKLDNKESEFNEGRINDRLKYSEAMQTIQDLQSSISQLELKKAEKWTQNQLRGSSVCDLDEESNSHGSICSNVDHLSLASDEMNALLADMTVRIPTLDDLAEEGSATETDELRPKELNDGNDTTDSGVQLSDSH.

Positions 41 to 60 (RSNSNSTSSPRNSPSQLSPP) are enriched in low complexity. Disordered stretches follow at residues 41–87 (RSNS…CETG) and 104–135 (LNKS…HSPE). A compositionally biased stretch (polar residues) spans 114-123 (SVASKKTGSS). The segment covering 124 to 133 (ESRKGAREHS) has biased composition (basic and acidic residues). The 185-residue stretch at 173–357 (GIPQHFRMIA…RIMDCFLVEG (185 aa)) folds into the Rab-GAP TBC domain. The interval 631-654 (ASIEKESTSEAHSTQQQPSPPLTS) is disordered. Residues 694–770 (EADTLAELKE…ESEFNEGRIN (77 aa)) adopt a coiled-coil conformation. The segment at 854 to 888 (LAEEGSATETDELRPKELNDGNDTTDSGVQLSDSH) is disordered. Residues 874–888 (GNDTTDSGVQLSDSH) are compositionally biased toward polar residues.

May interact with rab-6.2 (in GTP-bound form). Highly expressed in the terminal bulb muscles, pharyngeal muscle, in intestine and vulva.

Rab GTPase activating protein for the small GTPase rab-6.2. Required for grinder formation, which is the feeding organ that breaks down food. This chain is Rab GTPase-activating protein eat-17, found in Caenorhabditis elegans.